The following is an 882-amino-acid chain: Alanine--tRNA ligase (882 aa).

Positions 571, 575, 673, and 677 each coordinate Zn(2+).

The protein belongs to the class-II aminoacyl-tRNA synthetase family. Requires Zn(2+) as cofactor.

It is found in the cytoplasm. The enzyme catalyses tRNA(Ala) + L-alanine + ATP = L-alanyl-tRNA(Ala) + AMP + diphosphate. In terms of biological role, catalyzes the attachment of alanine to tRNA(Ala) in a two-step reaction: alanine is first activated by ATP to form Ala-AMP and then transferred to the acceptor end of tRNA(Ala). Also edits incorrectly charged Ser-tRNA(Ala) and Gly-tRNA(Ala) via its editing domain. This chain is Alanine--tRNA ligase, found in Desulfotalea psychrophila (strain LSv54 / DSM 12343).